Reading from the N-terminus, the 133-residue chain is Secretin (133 aa).

The signal sequence occupies residues methionine 1–alanine 22. The propeptide occupies leucine 23–proline 30. Valine 58 bears the Valine amide mark. A Phosphoserine modification is found at serine 62. Positions serine 62–arginine 133 are excised as a propeptide.

The protein belongs to the glucagon family. Highly expressed in the intestine. Also expressed in the hippocampus, cerebellum and the brain stem in adult mouse brain. In the hippocampus, expressed in the dentate gyrus, the hilus and the molecular layer.

It is found in the secreted. Hormone involved in different processes, such as regulation of the pH of the duodenal content, food intake and water homeostasis. Exerts its biological effects by binding to secretin receptor (SCTR), a G-protein coupled receptor expressed in the basolateral domain of several cells. Acts as a key gastrointestinal hormone by regulating the pH of the duodenal content. Secreted by S cells of the duodenum in the crypts of Lieberkuehn and regulates the pH of the duodenum by (1) inhibiting the secretion of gastric acid from the parietal cells of the stomach and (2) stimulating the production of bicarbonate (NaHCO(3)) from the ductal cells of the pancreas. Production of bicarbonate is essential to neutralize the pH and ensure no damage is done to the small intestine by the gastric acid. In addition to regulating the pH of the duodenal content, plays a central role in diet induced thermogenesis: acts as a non-sympathetic brown fat (BAT) activator mediating prandial thermogenesis, which consequentially induces satiation. Mechanistically, secretin released by the gut after a meal binds to secretin receptor (SCTR) in brown adipocytes, activating brown fat thermogenesis by stimulating lipolysis, which is sensed in the brain and promotes satiation. Also able to stimulate lipolysis in white adipocytes. Also plays an important role in cellular osmoregulation: released into the systemic circulation in response to hyperosmolality and acts at different levels in the hypothalamus, pituitary and kidney to regulate water homeostasis. Also plays a role in the central nervous system, possibly by acting as a neuropeptide hormone: required for hippocampal synaptic function and neural progenitor cells maintenance. This chain is Secretin, found in Mus musculus (Mouse).